We begin with the raw amino-acid sequence, 332 residues long: tRNA U34 carboxymethyltransferase (332 aa).

Residues lysine 91, tryptophan 105, lysine 110, glycine 130, 152 to 154, 181 to 182, methionine 196, tyrosine 200, and arginine 315 each bind carboxy-S-adenosyl-L-methionine; these read DPS and IE.

It belongs to the class I-like SAM-binding methyltransferase superfamily. CmoB family. Homotetramer.

The catalysed reaction is carboxy-S-adenosyl-L-methionine + 5-hydroxyuridine(34) in tRNA = 5-carboxymethoxyuridine(34) in tRNA + S-adenosyl-L-homocysteine + H(+). Functionally, catalyzes carboxymethyl transfer from carboxy-S-adenosyl-L-methionine (Cx-SAM) to 5-hydroxyuridine (ho5U) to form 5-carboxymethoxyuridine (cmo5U) at position 34 in tRNAs. The polypeptide is tRNA U34 carboxymethyltransferase (Shewanella sp. (strain W3-18-1)).